The primary structure comprises 183 residues: Translation initiation factor IF-3 (183 aa).

Belongs to the IF-3 family. Monomer.

Its subcellular location is the cytoplasm. IF-3 binds to the 30S ribosomal subunit and shifts the equilibrium between 70S ribosomes and their 50S and 30S subunits in favor of the free subunits, thus enhancing the availability of 30S subunits on which protein synthesis initiation begins. This Yersinia pseudotuberculosis serotype O:1b (strain IP 31758) protein is Translation initiation factor IF-3.